Consider the following 449-residue polypeptide: Methionine aminopeptidase 2 (449 aa).

The disordered stretch occupies residues 1-91 (MAAQAAPELA…PRIPLTTLFP (91 aa)). Residues 34-50 (EEAENEGDSEDDRDDEQ) show a composition bias toward acidic residues. The span at 61–75 (KKKKKKRPKKKKKTA) shows a compositional bias: basic residues. A substrate-binding site is contributed by H199. A divalent metal cation contacts are provided by D219, D230, and H299. H307 contributes to the substrate binding site. A divalent metal cation is bound by residues E335 and E430.

It belongs to the peptidase M24A family. Methionine aminopeptidase eukaryotic type 2 subfamily. The cofactor is Co(2+). Requires Zn(2+) as cofactor. Mn(2+) is required as a cofactor. It depends on Fe(2+) as a cofactor.

The protein localises to the cytoplasm. The catalysed reaction is Release of N-terminal amino acids, preferentially methionine, from peptides and arylamides.. Cotranslationally removes the N-terminal methionine from nascent proteins. The N-terminal methionine is often cleaved when the second residue in the primary sequence is small and uncharged (Met-Ala-, Cys, Gly, Pro, Ser, Thr, or Val). This Trichophyton verrucosum (strain HKI 0517) protein is Methionine aminopeptidase 2.